Consider the following 295-residue polypeptide: Cyclic dipyrimidine nucleotide synthase CdnE (295 aa).

Residues 1–25 (MSIDWEQTFRKWSKPSSETESTKAE) are disordered. The UTP site is built by glutamine 51, serine 53, and asparagine 59. Residues aspartate 65 and aspartate 67 each coordinate Mg(2+). Residues aspartate 67, aspartate 124, and lysine 125 each coordinate UTP. Residues aspartate 128 and aspartate 139 each coordinate Mg(2+). UTP contacts are provided by aspartate 139, asparagine 173, lysine 201, and serine 220. Positions 274–276 (QMW) match the Pyrimidine specificity motif (R/Q)xW in donor pocket motif.

It belongs to the CD-NTase family. E02 subfamily. It depends on Mg(2+) as a cofactor.

It catalyses the reaction 2 UTP = c-di-UMP + 2 diphosphate. The enzyme catalyses UTP + CTP = cyclic CMP-UMP + 2 diphosphate. Its function is as follows. Cyclic nucleotide synthase (second messenger synthase) of a CBASS antivirus system. CBASS (cyclic oligonucleotide-based antiphage signaling system) provides immunity against bacteriophage. The CD-NTase protein synthesizes cyclic nucleotides in response to infection; these serve as specific second messenger signals. The signals activate a diverse range of effectors, leading to bacterial cell death and thus abortive phage infection. A type I-B(UU) CBASS system. In terms of biological role, cyclic dinucleotide synthase that catalyzes the synthesis of 3',3'-cyclic UMP-UMP (c-di-UMP) as the major product, and of 3',3'-cyclic CMP-UMP as a minor product, which are second messengers for cell signal transduction. This Legionella pneumophila protein is Cyclic dipyrimidine nucleotide synthase CdnE.